The following is a 745-amino-acid chain: ATP-dependent zinc metalloprotease FtsH (745 aa).

The Cytoplasmic segment spans residues 1–11 (MNNRRNGLFRN). The helical transmembrane segment at 12-32 (SLFYILMFLSLMGIIYFFFGG) threads the bilayer. Over 33-131 (NSGSQTQNIR…VTAKAEESSG (99 aa)) the chain is Extracellular. The helical transmembrane segment at 132 to 152 (IWVTLLMYIAPVILMLFLFYM) threads the bilayer. The Cytoplasmic portion of the chain corresponds to 153–745 (MMGQAGQGGG…SSQDDTNSQA (593 aa)). 227–234 (GPPGTGKT) is an ATP binding site. Histidine 449 contributes to the Zn(2+) binding site. Glutamate 450 is an active-site residue. Zn(2+) contacts are provided by histidine 453 and aspartate 525. Over residues 630–673 (MPEKDSNEFPSEKAATFEESKRELERREAEKHAQNQSADDKQAD) the composition is skewed to basic and acidic residues. The disordered stretch occupies residues 630-745 (MPEKDSNEFP…SSQDDTNSQA (116 aa)). A compositionally biased stretch (low complexity) spans 690-704 (SESDASSEVSADSSV). Over residues 705-745 (NSTANSATESATDSDVATSATGLPNAESATPSSQDDTNSQA) the composition is skewed to polar residues.

The protein in the central section; belongs to the AAA ATPase family. This sequence in the C-terminal section; belongs to the peptidase M41 family. In terms of assembly, homohexamer. Zn(2+) is required as a cofactor.

It is found in the cell membrane. Its function is as follows. Acts as a processive, ATP-dependent zinc metallopeptidase for both cytoplasmic and membrane proteins. Plays a role in the quality control of integral membrane proteins. The polypeptide is ATP-dependent zinc metalloprotease FtsH (Lactiplantibacillus plantarum (strain ATCC BAA-793 / NCIMB 8826 / WCFS1) (Lactobacillus plantarum)).